The primary structure comprises 111 residues: Cornifelin homolog A (111 aa).

This sequence belongs to the cornifelin family.

The sequence is that of Cornifelin homolog A (cnfn-a) from Xenopus laevis (African clawed frog).